Here is a 630-residue protein sequence, read N- to C-terminus: Transcription factor MYC1 (630 aa).

Disordered stretches follow at residues phenylalanine 356 to glutamate 398 and valine 430 to arginine 463. Residues lysine 440–alanine 449 show a composition bias toward basic residues. Residues asparagine 450–arginine 463 are compositionally biased toward basic and acidic residues. The tract at residues glutamate 453–arginine 466 is basic motif; degenerate. The bHLH domain maps to glutamate 453–leucine 502. Residues glutamate 467–leucine 502 form a helix-loop-helix motif region.

Highly expressed in trichomes and at lower levels in leaves and flowers. Expressed at low levels in roots, stems, leaves, flowers and fruits.

It localises to the nucleus. Transcriptional activator that binds to the G-box motif (5'-AACGTG-3') found in a number of promoters of jasmonate-induced genes. Transcription activator involved in the transcriptional regulation of terpene biosynthesis in glandular trichomes. Binds to the promoter of the linalool synthase TPS5 and promotes TPS5 gene transactivation. Acts synergistically with EOT1 in the transactivation of TPS5. Involved in type VI glandular trichome development. Involved in the activation of terpene synthases required for volatile mono- and sesquiterpenes synthesis by the glandular cells of type VI trichomes. This chain is Transcription factor MYC1, found in Solanum lycopersicum (Tomato).